The following is a 75-amino-acid chain: Small ribosomal subunit protein bS18 (75 aa).

The protein belongs to the bacterial ribosomal protein bS18 family. Part of the 30S ribosomal subunit. Forms a tight heterodimer with protein bS6.

Its function is as follows. Binds as a heterodimer with protein bS6 to the central domain of the 16S rRNA, where it helps stabilize the platform of the 30S subunit. This chain is Small ribosomal subunit protein bS18, found in Laribacter hongkongensis (strain HLHK9).